The chain runs to 611 residues: Elongation factor 4 (611 aa).

A tr-type G domain is found at 11 to 193 (KHIRNFSIVA…KIVKDVPAPT (183 aa)). Residues 23-28 (DHGKST) and 140-143 (NKID) each bind GTP.

This sequence belongs to the TRAFAC class translation factor GTPase superfamily. Classic translation factor GTPase family. LepA subfamily.

The protein localises to the cell membrane. The enzyme catalyses GTP + H2O = GDP + phosphate + H(+). Required for accurate and efficient protein synthesis under certain stress conditions. May act as a fidelity factor of the translation reaction, by catalyzing a one-codon backward translocation of tRNAs on improperly translocated ribosomes. Back-translocation proceeds from a post-translocation (POST) complex to a pre-translocation (PRE) complex, thus giving elongation factor G a second chance to translocate the tRNAs correctly. Binds to ribosomes in a GTP-dependent manner. The protein is Elongation factor 4 of Limosilactobacillus reuteri (strain DSM 20016) (Lactobacillus reuteri).